The primary structure comprises 282 residues: Putative polysaccharide deacetylase YheN (282 aa).

The helical transmembrane segment at 15-35 (LAFKFASLAVLCVLLLLMVIL) threads the bilayer. The region spanning 85-271 (KTVYLTFDDG…KLKEKGYSFG (187 aa)) is the NodB homology domain.

It belongs to the polysaccharide deacetylase family.

It localises to the cell membrane. The chain is Putative polysaccharide deacetylase YheN (yheN) from Bacillus subtilis (strain 168).